The primary structure comprises 705 residues: 1,4-alpha-glucan branching enzyme GlgB (705 aa).

Aspartate 309 serves as the catalytic Nucleophile. Glutamate 360 serves as the catalytic Proton donor. A disordered region spans residues 654 to 705; the sequence is VQVERAADPRPNEQQRLVAETPAHEGGRSAPADAAESAEQKPDDEQKGGKKA. Residues 691–705 are compositionally biased toward basic and acidic residues; the sequence is AEQKPDDEQKGGKKA.

It belongs to the glycosyl hydrolase 13 family. GlgB subfamily. As to quaternary structure, monomer.

It catalyses the reaction Transfers a segment of a (1-&gt;4)-alpha-D-glucan chain to a primary hydroxy group in a similar glucan chain.. Its pathway is glycan biosynthesis; glycogen biosynthesis. Its function is as follows. Catalyzes the formation of the alpha-1,6-glucosidic linkages in glycogen by scission of a 1,4-alpha-linked oligosaccharide from growing alpha-1,4-glucan chains and the subsequent attachment of the oligosaccharide to the alpha-1,6 position. In Deinococcus radiodurans (strain ATCC 13939 / DSM 20539 / JCM 16871 / CCUG 27074 / LMG 4051 / NBRC 15346 / NCIMB 9279 / VKM B-1422 / R1), this protein is 1,4-alpha-glucan branching enzyme GlgB.